Consider the following 791-residue polypeptide: Outer membrane protein assembly factor BamA (791 aa).

5 consecutive POTRA domains span residues 59-130, 131-209, 212-298, 301-383, and 386-459; these read NAIA…VTEK, PRID…VEEG, LYIK…VKEG, YKLG…IRKR, and VYIN…VKEQ.

The protein belongs to the BamA family. In terms of assembly, part of the Bam complex.

It is found in the cell outer membrane. Its function is as follows. Part of the outer membrane protein assembly complex, which is involved in assembly and insertion of beta-barrel proteins into the outer membrane. This chain is Outer membrane protein assembly factor BamA, found in Nitratidesulfovibrio vulgaris (strain ATCC 29579 / DSM 644 / CCUG 34227 / NCIMB 8303 / VKM B-1760 / Hildenborough) (Desulfovibrio vulgaris).